Consider the following 892-residue polypeptide: MSSRGGGVGGRRGGPGGASSVRGGERGRKRGRGALDAVEPRVPLPRGTGSGPGAGRDGAAAPVPALQPAEADVLSGEVETEMAAGMEAREGASSSSSASAPAVGEVEPPSRAVGALPPTSSKAVVLQARPGFGTVGTSCRVRANHFVVQLADKEIYHYDVAIAPELRSRERNRNIINELLRSHKKYLDGRRSPAYDGRKGMFTAGALPFTDREFVVKIANDPERGNQGEKEFKVTIKCAGAANLYMHSLKQFLAGTYPSQDRFSHKHLDIRILIVALNGGEDISATTFYKAQPVIDFALDYLNMNIRDAYSRFDQDGTRVSVVQYFNRQYSYSLKYINWPCLQAGSDSRPTYLPMEVCRIVKGQRYSRKLNECQVTRMLRLARETPEERENSILEIANENNYGNDYHAREFGIGVTNQLALVDARVLPAPMLKYHDSGQEKVCNPSIGQWNMNNKRMLNGGSINYWACLTFASCVRLAEVRTFCKELVRVCNSIGMQITGEPCVRIRQERQDHLDAAVRDIHRQSAEFLSQQGVIGQQLELLVIVLPDANATVFYGRIKRLCETELGVITQCCLARNVQNVGGRNTVLEDALHRRIPLLTDMPTMIFGADVTHPPAGEDSSPSIAAVVASMDWPEVSKYKCSVSSQSHREEIIADLFTEVKDSQNRLVYGGMIRELIESFRKANGSYKPGRIIFYRDGVSEGQFSQVLLSEMDAIRKACASIEEGYLPPVTFVVVQKRHHTRLFPEDHHARDQMDRSRNILPGTVVDTKICHPSEFDFYLCSHSGIQGTSHPTHYYVLFDENNFSADALQTLTYHLCYTYARCTRSVSIVPPVYYAHLAASRARHYLEEGSLPDHGSSSASAAGGSRRNDRGVPVKPLPEIKENVKQFMFYC.

A compositionally biased stretch (gly residues) spans 1–17; it reads MSSRGGGVGGRRGGPGG. Disordered regions lie at residues 1–68 and 86–117; these read MSSR…ALQP and MEAR…GALP. Low complexity predominate over residues 86–107; that stretch reads MEAREGASSSSSASAPAVGEVE. A PAZ domain is found at 248 to 362; sequence SLKQFLAGTY…LPMEVCRIVK (115 aa). The Piwi domain occupies 541 to 848; that stretch reads LLVIVLPDAN…AASRARHYLE (308 aa). The tract at residues 850-876 is disordered; it reads GSLPDHGSSSASAAGGSRRNDRGVPVK. Low complexity predominate over residues 856–866; that stretch reads GSSSASAAGGS. Residues 867 to 876 show a composition bias toward basic and acidic residues; that stretch reads RRNDRGVPVK.

The protein belongs to the argonaute family. Ago subfamily.

In terms of biological role, probably involved in the RNA silencing pathway. May bind to short RNAs such as microRNAs (miRNAs) or short interfering RNAs (siRNAs), and represses the translation of mRNAs which are complementary to them. The polypeptide is Protein argonaute 11 (AGO11) (Oryza sativa subsp. japonica (Rice)).